The primary structure comprises 384 residues: Succinyl-diaminopimelate desuccinylase (384 aa).

Position 72 (His-72) interacts with Zn(2+). Asp-74 is a catalytic residue. Asp-105 provides a ligand contact to Zn(2+). Glu-139 serves as the catalytic Proton acceptor. 3 residues coordinate Zn(2+): Glu-140, Glu-168, and His-355.

Belongs to the peptidase M20A family. DapE subfamily. Homodimer. Zn(2+) serves as cofactor. Requires Co(2+) as cofactor.

The enzyme catalyses N-succinyl-(2S,6S)-2,6-diaminopimelate + H2O = (2S,6S)-2,6-diaminopimelate + succinate. It participates in amino-acid biosynthesis; L-lysine biosynthesis via DAP pathway; LL-2,6-diaminopimelate from (S)-tetrahydrodipicolinate (succinylase route): step 3/3. In terms of biological role, catalyzes the hydrolysis of N-succinyl-L,L-diaminopimelic acid (SDAP), forming succinate and LL-2,6-diaminopimelate (DAP), an intermediate involved in the bacterial biosynthesis of lysine and meso-diaminopimelic acid, an essential component of bacterial cell walls. This Blochmanniella pennsylvanica (strain BPEN) protein is Succinyl-diaminopimelate desuccinylase.